The following is an 89-amino-acid chain: UPF0297 protein SUB1776 (89 aa).

This sequence belongs to the UPF0297 family.

This Streptococcus uberis (strain ATCC BAA-854 / 0140J) protein is UPF0297 protein SUB1776.